Reading from the N-terminus, the 336-residue chain is Galectin-12 (336 aa).

Galectin domains lie at 49-183 (YVTT…VGFL) and 212-336 (CSHA…CVHS).

Not widely expressed. Predominantly expressed in adipose tissue.

It localises to the nucleus. Binds lactose. May participate in the apoptosis of adipocytes. This Homo sapiens (Human) protein is Galectin-12 (LGALS12).